A 520-amino-acid polypeptide reads, in one-letter code: Phosphoenolpyruvate carboxykinase (ATP) (520 aa).

3 residues coordinate substrate: Arg61, Phe196, and Lys202. ATP-binding positions include Lys202, His222, and 238 to 246; that span reads GLSGTGKTT. Mn(2+) contacts are provided by Lys202 and His222. Mn(2+) is bound at residue Asp259. ATP-binding positions include Glu287, Arg324, 443–444, and Thr449; that span reads RI. Position 324 (Arg324) interacts with substrate.

This sequence belongs to the phosphoenolpyruvate carboxykinase (ATP) family. Mn(2+) is required as a cofactor.

It localises to the cytoplasm. The enzyme catalyses oxaloacetate + ATP = phosphoenolpyruvate + ADP + CO2. The protein operates within carbohydrate biosynthesis; gluconeogenesis. Its function is as follows. Involved in the gluconeogenesis. Catalyzes the conversion of oxaloacetate (OAA) to phosphoenolpyruvate (PEP) through direct phosphoryl transfer between the nucleoside triphosphate and OAA. In Amoebophilus asiaticus (strain 5a2), this protein is Phosphoenolpyruvate carboxykinase (ATP).